The primary structure comprises 360 residues: GTPase Obg (360 aa).

The 156-residue stretch at 1-156 (MFVDSVEIII…KCVRLELKLI (156 aa)) folds into the Obg domain. Positions 157–360 (ADIGLVGFPN…LKFVLLEALP (204 aa)) constitute an OBG-type G domain. GTP-binding positions include 163-170 (GFPNAGKS), 188-192 (FTTLV), 210-213 (DIPG), 279-282 (NKCD), and 341-343 (SAV). Mg(2+)-binding residues include S170 and T190.

The protein belongs to the TRAFAC class OBG-HflX-like GTPase superfamily. OBG GTPase family. In terms of assembly, monomer. Mg(2+) serves as cofactor.

The protein resides in the cytoplasm. Functionally, an essential GTPase which binds GTP, GDP and possibly (p)ppGpp with moderate affinity, with high nucleotide exchange rates and a fairly low GTP hydrolysis rate. Plays a role in control of the cell cycle, stress response, ribosome biogenesis and in those bacteria that undergo differentiation, in morphogenesis control. The protein is GTPase Obg of Helicobacter pylori (strain HPAG1).